We begin with the raw amino-acid sequence, 808 residues long: Dynamin-related protein 3A (808 aa).

Residues 1–31 (MTIEEVSGETPPSTPPSSSTPSPSSSTTNAA) form a disordered region. Residues 16 to 28 (PSSSTPSPSSSTT) show a composition bias toward low complexity. Positions 56 to 330 (TIALPQVVVV…LVQHIKVLLP (275 aa)) constitute a Dynamin-type G domain. The segment at 66–73 (GSQSSGKS) is G1 motif. A GTP-binding site is contributed by 66 to 73 (GSQSSGKS). The tract at residues 92–94 (CTR) is G2 motif. A G3 motif region spans residues 172 to 175 (DLPG). GTP-binding positions include 172–176 (DLPGI) and 241–244 (TKLD). Residues 241–244 (TKLD) form a G4 motif region. A G5 motif region spans residues 271 to 274 (VNRC). The interval 548-578 (IPHPVARPKDTVEPDRTSSSTSQVKSRSFLG) is disordered. Over residues 554–563 (RPKDTVEPDR) the composition is skewed to basic and acidic residues. The segment covering 564–575 (TSSSTSQVKSRS) has biased composition (low complexity). Residues 670 to 761 (IQITKLLLRS…TLDELPLEAD (92 aa)) enclose the GED domain. Residues 774–808 (LTSSKYSTSSSYSASPSTTRRSRRAGDQHQNGYGF) form a disordered region. Low complexity predominate over residues 775 to 792 (TSSKYSTSSSYSASPSTT).

It belongs to the TRAFAC class dynamin-like GTPase superfamily. Dynamin/Fzo/YdjA family. Homooligomer. Interacts with ARC5 on peroxisomes and ELM1 on mitochondria. Ubiquitous. Preferentially expressed in flowers.

It localises to the mitochondrion. The protein resides in the peroxisome. Involved in the control of mitochondrial and peroxisomal division and morphology. In association with PEX11C, PEX11D, PEX11E and FIS1B, is involved in cell cycle-associated constitutive self-replication of preexisting peroxisomes. The polypeptide is Dynamin-related protein 3A (DRP3A) (Arabidopsis thaliana (Mouse-ear cress)).